The sequence spans 99 residues: Class II hydrophobin 2 (99 aa).

Positions 1-15 are cleaved as a signal peptide; that stretch reads MKFFVVAALFAGALA. 2 disulfides stabilise this stretch: C30–C79 and C40–C70.

Belongs to the cerato-ulmin hydrophobin family. As to quaternary structure, homotetramer. Further self-assembles to form highly ordered films at water-air interfaces through intermolecular interactions.

The protein resides in the secreted. Its subcellular location is the cell wall. Aerial growth, conidiation, and dispersal of filamentous fungi in the environment rely upon a capability of their secreting small amphipathic proteins called hydrophobins (HPBs) with low sequence identity. Class I can self-assemble into an outermost layer of rodlet bundles on aerial cell surfaces, conferring cellular hydrophobicity that supports fungal growth, development and dispersal; whereas Class II form highly ordered films at water-air interfaces through intermolecular interactions but contribute nothing to the rodlet structure. HYD2 is a class II hydrophobin that contributes to the fruiting body development. In Cordyceps militaris (Caterpillar fungus), this protein is Class II hydrophobin 2.